A 413-amino-acid chain; its full sequence is Gamma-glutamyl phosphate reductase (413 aa).

Belongs to the gamma-glutamyl phosphate reductase family.

It localises to the cytoplasm. The enzyme catalyses L-glutamate 5-semialdehyde + phosphate + NADP(+) = L-glutamyl 5-phosphate + NADPH + H(+). It participates in amino-acid biosynthesis; L-proline biosynthesis; L-glutamate 5-semialdehyde from L-glutamate: step 2/2. Its function is as follows. Catalyzes the NADPH-dependent reduction of L-glutamate 5-phosphate into L-glutamate 5-semialdehyde and phosphate. The product spontaneously undergoes cyclization to form 1-pyrroline-5-carboxylate. The protein is Gamma-glutamyl phosphate reductase of Caulobacter vibrioides (strain ATCC 19089 / CIP 103742 / CB 15) (Caulobacter crescentus).